Consider the following 199-residue polypeptide: Thymidine kinase (199 aa).

ATP contacts are provided by residues 23-30 (GSMFSGKT) and 95-98 (DEAQ). Glu-96 functions as the Proton acceptor in the catalytic mechanism. Residues Cys-152, Cys-155, Cys-184, and Cys-187 each contribute to the Zn(2+) site.

The protein belongs to the thymidine kinase family. Homotetramer.

It is found in the cytoplasm. The catalysed reaction is thymidine + ATP = dTMP + ADP + H(+). This Bacteroides fragilis (strain ATCC 25285 / DSM 2151 / CCUG 4856 / JCM 11019 / LMG 10263 / NCTC 9343 / Onslow / VPI 2553 / EN-2) protein is Thymidine kinase.